Reading from the N-terminus, the 462-residue chain is Putative amidase AmiB2 (462 aa).

Active-site charge relay system residues include K81 and S155. The Acyl-ester intermediate role is filled by S179.

The protein belongs to the amidase family.

It carries out the reaction a monocarboxylic acid amide + H2O = a monocarboxylate + NH4(+). This Mycobacterium bovis (strain ATCC BAA-935 / AF2122/97) protein is Putative amidase AmiB2 (amiB2).